The chain runs to 739 residues: Phosphoribosylformylglycinamidine synthase subunit PurL (739 aa).

H55 is an active-site residue. Positions 58 and 97 each coordinate ATP. Mg(2+) is bound at residue E99. Residues 100–103 (SHNH) and R122 contribute to the substrate site. The active-site Proton acceptor is the H101. A Mg(2+)-binding site is contributed by D123. Q246 provides a ligand contact to substrate. Position 276 (D276) interacts with Mg(2+). Residue 320–322 (ESQ) participates in substrate binding. D502 and G539 together coordinate ATP. N540 is a binding site for Mg(2+). S542 serves as a coordination point for substrate.

The protein belongs to the FGAMS family. As to quaternary structure, monomer. Part of the FGAM synthase complex composed of 1 PurL, 1 PurQ and 2 PurS subunits.

Its subcellular location is the cytoplasm. It carries out the reaction N(2)-formyl-N(1)-(5-phospho-beta-D-ribosyl)glycinamide + L-glutamine + ATP + H2O = 2-formamido-N(1)-(5-O-phospho-beta-D-ribosyl)acetamidine + L-glutamate + ADP + phosphate + H(+). The protein operates within purine metabolism; IMP biosynthesis via de novo pathway; 5-amino-1-(5-phospho-D-ribosyl)imidazole from N(2)-formyl-N(1)-(5-phospho-D-ribosyl)glycinamide: step 1/2. In terms of biological role, part of the phosphoribosylformylglycinamidine synthase complex involved in the purines biosynthetic pathway. Catalyzes the ATP-dependent conversion of formylglycinamide ribonucleotide (FGAR) and glutamine to yield formylglycinamidine ribonucleotide (FGAM) and glutamate. The FGAM synthase complex is composed of three subunits. PurQ produces an ammonia molecule by converting glutamine to glutamate. PurL transfers the ammonia molecule to FGAR to form FGAM in an ATP-dependent manner. PurS interacts with PurQ and PurL and is thought to assist in the transfer of the ammonia molecule from PurQ to PurL. This is Phosphoribosylformylglycinamidine synthase subunit PurL from Lactiplantibacillus plantarum (strain ATCC BAA-793 / NCIMB 8826 / WCFS1) (Lactobacillus plantarum).